A 346-amino-acid polypeptide reads, in one-letter code: Phosphate acyltransferase (346 aa).

The protein belongs to the PlsX family. As to quaternary structure, homodimer. Probably interacts with PlsY.

It is found in the cytoplasm. The catalysed reaction is a fatty acyl-[ACP] + phosphate = an acyl phosphate + holo-[ACP]. Its pathway is lipid metabolism; phospholipid metabolism. Catalyzes the reversible formation of acyl-phosphate (acyl-PO(4)) from acyl-[acyl-carrier-protein] (acyl-ACP). This enzyme utilizes acyl-ACP as fatty acyl donor, but not acyl-CoA. The sequence is that of Phosphate acyltransferase from Delftia acidovorans (strain DSM 14801 / SPH-1).